Reading from the N-terminus, the 270-residue chain is 4-hydroxy-tetrahydrodipicolinate reductase (270 aa).

Residues 11 to 16 and glutamate 37 each bind NAD(+); that span reads GASGRM. Arginine 38 contributes to the NADP(+) binding site. NAD(+)-binding positions include 101-103 and 125-128; these read GTT and SPNM. The Proton donor/acceptor role is filled by histidine 158. Histidine 159 is a (S)-2,3,4,5-tetrahydrodipicolinate binding site. The Proton donor role is filled by lysine 162. 168-169 contacts (S)-2,3,4,5-tetrahydrodipicolinate; that stretch reads GT.

The protein belongs to the DapB family.

It is found in the cytoplasm. The catalysed reaction is (S)-2,3,4,5-tetrahydrodipicolinate + NAD(+) + H2O = (2S,4S)-4-hydroxy-2,3,4,5-tetrahydrodipicolinate + NADH + H(+). It catalyses the reaction (S)-2,3,4,5-tetrahydrodipicolinate + NADP(+) + H2O = (2S,4S)-4-hydroxy-2,3,4,5-tetrahydrodipicolinate + NADPH + H(+). It functions in the pathway amino-acid biosynthesis; L-lysine biosynthesis via DAP pathway; (S)-tetrahydrodipicolinate from L-aspartate: step 4/4. Its function is as follows. Catalyzes the conversion of 4-hydroxy-tetrahydrodipicolinate (HTPA) to tetrahydrodipicolinate. The chain is 4-hydroxy-tetrahydrodipicolinate reductase from Shewanella denitrificans (strain OS217 / ATCC BAA-1090 / DSM 15013).